Reading from the N-terminus, the 107-residue chain is Large ribosomal subunit protein uL24 (107 aa).

This sequence belongs to the universal ribosomal protein uL24 family. As to quaternary structure, part of the 50S ribosomal subunit.

Its function is as follows. One of two assembly initiator proteins, it binds directly to the 5'-end of the 23S rRNA, where it nucleates assembly of the 50S subunit. Functionally, one of the proteins that surrounds the polypeptide exit tunnel on the outside of the subunit. This chain is Large ribosomal subunit protein uL24, found in Streptomyces coelicolor (strain ATCC BAA-471 / A3(2) / M145).